Here is a 433-residue protein sequence, read N- to C-terminus: MSSEDRHLGSSCGSFIKTEPSSPSSGIDALSHHSPSGSSDASGGFGMALGTHANGLDSPPMFAGAGLGGNPCRKSYEDCTSGIMEDSAIKCEYMLNAIPKRLCLVCGDIASGYHYGVASCEACKAFFKRTIQGNIEYSCPATNECEITKRRRKSCQACRFMKCLKVGMLKEGVRLDRVRGGRQKYKRRLDSENSPYLSLQISPPAKKPLTKIVSYLLVAEPDKLYAMPPDDVPEGDIKALTTLCDLADRELVFLISWAKHIPGFSNLTLGDQMSLLQSAWMEILILGIVYRSLPYDDKLAYAEDYIMDEEHSRLVGLLELYRAILQLVRRYKKLKVEKEEFVMLKALALANSDSMYIENLEAVQKLQDLLHEALQDYELSQRHEEPRRAGKLLLTLPLLRQTAAKAVQHFYSVKLQGKVPMHKLFLEMLEAKV.

The disordered stretch occupies residues 1-41; the sequence is MSSEDRHLGSSCGSFIKTEPSSPSSGIDALSHHSPSGSSDA. Residues 32–41 are compositionally biased toward low complexity; that stretch reads HHSPSGSSDA. An interaction with NANOG region spans residues 93–211; that stretch reads YMLNAIPKRL…SPPAKKPLTK (119 aa). The segment at residues 100–186 is a DNA-binding region (nuclear receptor); that stretch reads KRLCLVCGDI…RVRGGRQKYK (87 aa). 2 consecutive NR C4-type zinc fingers follow at residues 103–123 and 139–163; these read CLVC…CEAC and CPAT…FMKC. An essential for ESRRB transcriptional activity and interaction with NCOA3 region spans residues 203–433; it reads PPAKKPLTKI…LFLEMLEAKV (231 aa). The NR LBD domain occupies 208 to 432; that stretch reads PLTKIVSYLL…KLFLEMLEAK (225 aa).

Belongs to the nuclear hormone receptor family. NR3 subfamily. In terms of assembly, binds DNA as a monomer. Interacts with NR0B1; represses ESRRB activity at the GATA6 promoter. Interacts with NANOG; reciprocally modulates their transcriptional activities and activates POU5F1 expression. Interacts with NCOA3; mediates the interaction between ESRRB and RNA polymerase II complexes and allows NCOA3 corecruitment to ESRRB, KLF4, NANOG, and SOX2 enhancer regions to trigger ESRRB-dependent gene activation involved in self-renewal and pluripotency. Interacts with KDM1A; co-occupes the core set of ESRRB targets including ELF5 and EOMES. Interacts with the multiprotein complex Integrator, at least composed of INTS1, INTS2, INTS3, INTS4, INTS5, INTS6, INTS7, INTS8, INTS9/RC74, INTS10, INTS11/CPSF3L and INTS12; ESRRB is probably not a core component of the integrator complex and associates to integrator via its interaction with INTS1 and INTS9; attracts the transcriptional machinery. Interacts with JARID2. Interacts with POU5F1; recruits ESRRB near the POU5F1-SOX2 element in the NANOG proximal promoter leading to activation of NANOG expression; the interaction is DNA independent. Acetylated by PCAF/KAT2 (in vitro).

It is found in the nucleus. It localises to the cytoplasm. The protein resides in the chromosome. Its function is as follows. Transcription factor that binds a canonical ESRRB recognition (ERRE) sequence 5'TCAAGGTCA-3' localized on promoter and enhancer of targets genes regulating their expression or their transcription activity. Plays a role, in a LIF independent manner, in maintainance of self-renewal and pluripotency of embryonic and trophoblast stem cells through different signaling pathways including FGF signaling pathway and Wnt signaling pathways. Involved in morula development (2-16 cells embryos) by acting as a regulator at the 8-cell stage. Upon FGF signaling pathway activation, interacts with KDM1A by directly binding to enhancer site of ELF5 and EOMES and activating their transcription leading to self-renewal of trophoblast stem cells. Also regulates expression of multiple rod-specific genes and is required for survival of this cell type. Plays a role as transcription factor activator of GATA6, NR0B1, POU5F1 and PERM1. Plays a role as transcription factor repressor of NFE2L2 transcriptional activity and ESR1 transcriptional activity. During mitosis remains bound to a subset of interphase target genes, including pluripotency regulators, through the canonical ESRRB recognition (ERRE) sequence, leading to their transcriptional activation in early G1 phase. Can coassemble on structured DNA elements with other transcription factors like SOX2, POU5F1, KDM1A and NCOA3 to trigger ESRRB-dependent gene activation. This mechanism, in the case of SOX2 corecruitment prevents the embryonic stem cells (ESCs) to epiblast stem cells (EpiSC) transition through positive regulation of NR0B1 that inhibits the EpiSC transcriptional program. Also plays a role inner ear development by controlling expression of ion channels and transporters and in early placentation. The chain is Steroid hormone receptor ERR2 from Rattus norvegicus (Rat).